A 507-amino-acid chain; its full sequence is ATP synthase subunit alpha 2 (507 aa).

171 to 178 (GDRATGKT) provides a ligand contact to ATP.

This sequence belongs to the ATPase alpha/beta chains family. F-type ATPases have 2 components, CF(1) - the catalytic core - and CF(0) - the membrane proton channel. CF(1) has five subunits: alpha(3), beta(3), gamma(1), delta(1), epsilon(1). CF(0) has three main subunits: a(1), b(2) and c(9-12). The alpha and beta chains form an alternating ring which encloses part of the gamma chain. CF(1) is attached to CF(0) by a central stalk formed by the gamma and epsilon chains, while a peripheral stalk is formed by the delta and b chains.

It is found in the cell inner membrane. It carries out the reaction ATP + H2O + 4 H(+)(in) = ADP + phosphate + 5 H(+)(out). Functionally, produces ATP from ADP in the presence of a proton gradient across the membrane. The alpha chain is a regulatory subunit. This chain is ATP synthase subunit alpha 2, found in Gluconobacter oxydans (strain 621H) (Gluconobacter suboxydans).